The following is a 272-amino-acid chain: NADPH-dependent 7-cyano-7-deazaguanine reductase (272 aa).

Position 82 to 84 (82 to 84 (IES)) interacts with substrate. 84 to 85 (SK) lines the NADPH pocket. Cys178 functions as the Thioimide intermediate in the catalytic mechanism. The active-site Proton donor is the Asp185. 217 to 218 (HE) is a binding site for substrate. 246 to 247 (RG) provides a ligand contact to NADPH.

This sequence belongs to the GTP cyclohydrolase I family. QueF type 2 subfamily. In terms of assembly, homodimer.

Its subcellular location is the cytoplasm. The catalysed reaction is 7-aminomethyl-7-carbaguanine + 2 NADP(+) = 7-cyano-7-deazaguanine + 2 NADPH + 3 H(+). Its pathway is tRNA modification; tRNA-queuosine biosynthesis. Its function is as follows. Catalyzes the NADPH-dependent reduction of 7-cyano-7-deazaguanine (preQ0) to 7-aminomethyl-7-deazaguanine (preQ1). This is NADPH-dependent 7-cyano-7-deazaguanine reductase from Stenotrophomonas maltophilia (strain K279a).